A 1051-amino-acid chain; its full sequence is Exportin-T (1051 aa).

Belongs to the exportin family.

The protein localises to the nucleus. The protein resides in the cytoplasm. Functionally, tRNA nucleus export receptor which facilitates tRNA translocation across the nuclear pore complex. Involved in pre-tRNA splicing, probably by affecting the interaction of pre-tRNA with splicing endonuclease. The chain is Exportin-T (LOS1) from Eremothecium gossypii (strain ATCC 10895 / CBS 109.51 / FGSC 9923 / NRRL Y-1056) (Yeast).